A 282-amino-acid polypeptide reads, in one-letter code: Phosphate import ATP-binding protein PstB (282 aa).

The interval 1–33 (MNMAETQLNPIARPTAPAGFDPAQSGQSQAPSR) is disordered. Residues 36–277 (IEINDLNFFY…PVRKETEDYI (242 aa)) enclose the ABC transporter domain. 68 to 75 (GPSGCGKS) lines the ATP pocket.

This sequence belongs to the ABC transporter superfamily. Phosphate importer (TC 3.A.1.7) family. The complex is composed of two ATP-binding proteins (PstB), two transmembrane proteins (PstC and PstA) and a solute-binding protein (PstS).

Its subcellular location is the cell inner membrane. The catalysed reaction is phosphate(out) + ATP + H2O = ADP + 2 phosphate(in) + H(+). Part of the ABC transporter complex PstSACB involved in phosphate import. Responsible for energy coupling to the transport system. This Paraburkholderia xenovorans (strain LB400) protein is Phosphate import ATP-binding protein PstB.